The following is a 341-amino-acid chain: Methionine import ATP-binding protein MetN 1 (341 aa).

The region spanning 2-241 (IEFRQVSKTF…PKTTIAQNFV (240 aa)) is the ABC transporter domain. 38-45 (GYSGAGKS) lines the ATP pocket.

Belongs to the ABC transporter superfamily. Methionine importer (TC 3.A.1.24) family. The complex is composed of two ATP-binding proteins (MetN), two transmembrane proteins (MetI) and a solute-binding protein (MetQ).

Its subcellular location is the cell membrane. The catalysed reaction is L-methionine(out) + ATP + H2O = L-methionine(in) + ADP + phosphate + H(+). It catalyses the reaction D-methionine(out) + ATP + H2O = D-methionine(in) + ADP + phosphate + H(+). In terms of biological role, part of the ABC transporter complex MetNIQ involved in methionine import. Responsible for energy coupling to the transport system. This Staphylococcus aureus (strain USA300) protein is Methionine import ATP-binding protein MetN 1.